The chain runs to 159 residues: SsrA-binding protein (159 aa).

Belongs to the SmpB family.

It is found in the cytoplasm. Required for rescue of stalled ribosomes mediated by trans-translation. Binds to transfer-messenger RNA (tmRNA), required for stable association of tmRNA with ribosomes. tmRNA and SmpB together mimic tRNA shape, replacing the anticodon stem-loop with SmpB. tmRNA is encoded by the ssrA gene; the 2 termini fold to resemble tRNA(Ala) and it encodes a 'tag peptide', a short internal open reading frame. During trans-translation Ala-aminoacylated tmRNA acts like a tRNA, entering the A-site of stalled ribosomes, displacing the stalled mRNA. The ribosome then switches to translate the ORF on the tmRNA; the nascent peptide is terminated with the 'tag peptide' encoded by the tmRNA and targeted for degradation. The ribosome is freed to recommence translation, which seems to be the essential function of trans-translation. The polypeptide is SsrA-binding protein (Idiomarina loihiensis (strain ATCC BAA-735 / DSM 15497 / L2-TR)).